We begin with the raw amino-acid sequence, 105 residues long: Insulin (105 aa).

Positions 1–24 (MALWTRLRPLLALLALWPPPPARA) are cleaved as a signal peptide. Cystine bridges form between Cys31-Cys91, Cys43-Cys104, and Cys90-Cys95. A propeptide spans 57-82 (EVEGPQVGALELAGGPGAGGLEGPPQ) (c peptide).

Belongs to the insulin family. In terms of assembly, heterodimer of a B chain and an A chain linked by two disulfide bonds.

It localises to the secreted. Insulin decreases blood glucose concentration. It increases cell permeability to monosaccharides, amino acids and fatty acids. It accelerates glycolysis, the pentose phosphate cycle, and glycogen synthesis in liver. The sequence is that of Insulin (INS) from Bos taurus (Bovine).